The chain runs to 140 residues: MGKKLMRIGISLPGELLDKFDKTLMKRGYSSRSEGIRDAIRTYNQHYEWMKQIRGSRSATISIVYDCSKKGVTSTLAEIQHEYVDMISSSVHFHMEEDLCFEVIILRGEGEQIVDLAQRILSIKGVKHLRLTTVPEEKNE.

His81, His92, His94, and Cys100 together coordinate Ni(2+).

The protein belongs to the transcriptional regulatory CopG/NikR family. Requires Ni(2+) as cofactor.

In terms of biological role, transcriptional regulator. This is Putative nickel-responsive regulator 3 from Methanosarcina mazei (strain ATCC BAA-159 / DSM 3647 / Goe1 / Go1 / JCM 11833 / OCM 88) (Methanosarcina frisia).